The following is a 425-amino-acid chain: Proline iminopeptidase (425 aa).

One can recognise an AB hydrolase-1 domain in the interval 52 to 315 (PWLLYLQGGP…EFPALAWAQG (264 aa)). Residue serine 146 is the Nucleophile of the active site. Aspartate 351 is an active-site residue. Histidine 404 acts as the Proton donor in catalysis.

Belongs to the peptidase S33 family. As to quaternary structure, homotetramer.

The protein localises to the cytoplasm. The catalysed reaction is Release of N-terminal proline from a peptide.. Its function is as follows. Higher activity toward long peptides. Acts on hydroxyproline beta-naphthylamide with almost as high an activity as on proline beta-naphthylamide. The polypeptide is Proline iminopeptidase (pip) (Aeromonas sobria).